We begin with the raw amino-acid sequence, 434 residues long: Histidinol dehydrogenase (434 aa).

Positions 130, 191, and 214 each coordinate NAD(+). 3 residues coordinate substrate: Ser-237, Gln-259, and His-262. Zn(2+)-binding residues include Gln-259 and His-262. Active-site proton acceptor residues include Glu-328 and His-329. Substrate-binding residues include His-329, Asp-362, Glu-416, and His-421. Asp-362 is a binding site for Zn(2+). His-421 contributes to the Zn(2+) binding site.

Belongs to the histidinol dehydrogenase family. Zn(2+) is required as a cofactor.

The catalysed reaction is L-histidinol + 2 NAD(+) + H2O = L-histidine + 2 NADH + 3 H(+). It participates in amino-acid biosynthesis; L-histidine biosynthesis; L-histidine from 5-phospho-alpha-D-ribose 1-diphosphate: step 9/9. Catalyzes the sequential NAD-dependent oxidations of L-histidinol to L-histidinaldehyde and then to L-histidine. The polypeptide is Histidinol dehydrogenase (Rhodospirillum rubrum (strain ATCC 11170 / ATH 1.1.1 / DSM 467 / LMG 4362 / NCIMB 8255 / S1)).